The sequence spans 674 residues: Polyunsaturated fatty acid 5-lipoxygenase (674 aa).

One can recognise a PLAT domain in the interval 2–118 (PSYTVTVATG…EVVLRDGRAK (117 aa)). Ca(2+) contacts are provided by Gly17, Thr18, Asp19, Asn44, Asp45, Glu47, Asp79, and Asp80. The Lipoxygenase domain maps to 119–674 (LARDDQIHIL…PDRIPNSVAI (556 aa)). The residue at position 272 (Ser272) is a Phosphoserine; by MAPKAPK2. Residues His368 and His373 each coordinate Fe cation. The residue at position 524 (Ser524) is a Phosphoserine; by PKA. Fe cation contacts are provided by His551, Asn555, and Ile674.

Belongs to the lipoxygenase family. In terms of assembly, homodimer. Interacts with ALOX5AP and LTC4S. Interacts with COTL1, the interaction is required for stability and efficient catalytic activity. Interacts with PIK3R1; this interaction bridges ALOX5 with CD40 after CD40 ligation in B cells and leads to the production of reactive oxygen species (ROS). Interacts (via PLAT domain) with DICER1 (via Dicer dsRNA-binding fold domain); this interaction enhances arachidonate 5-lipoxygenase activity and modifies the miRNA precursor processing activity of DICER1. Fe cation is required as a cofactor. Serine phosphorylation by MAPKAPK2 is stimulated by arachidonic acid. Phosphorylation on Ser-524 by PKA has an inhibitory effect. Phosphorylation on Ser-272 prevents export from the nucleus. Phosphorylation at Ser-524 is stimulated by 8-bromo-3',5'-cyclic AMP or prostaglandin E2.

The protein resides in the cytoplasm. The protein localises to the nucleus matrix. Its subcellular location is the nucleus membrane. It localises to the perinuclear region. It is found in the cytosol. The protein resides in the nucleus envelope. The protein localises to the nucleus intermembrane space. It carries out the reaction (5Z,8Z,11Z,14Z)-eicosatetraenoate + O2 = leukotriene A4 + H2O. The catalysed reaction is 18-HEPE + O2 = (5S)-hydroperoxy-18-hydroxy-(7E,9E,11Z,14Z,16E)-eicosapentaenoate. It catalyses the reaction (18R)-hydroxy-(5Z,8Z,11Z,14Z,16E)-eicosapentaenoate + O2 = (5S)-hydroperoxy-(18R)-hydroxy-(6E,8Z,11Z,14Z,16E)-eicosapentaenoate. The enzyme catalyses (18S)-hydroxy-(5Z,8Z,11Z,14Z,16E)-eicosapentaenoate + O2 = (5S)-hydroperoxy-(18S)-hydroxy-(6E,8Z,11Z,14Z,16E)-eicosapentaenoate. It carries out the reaction (5S)-hydroperoxy-(18S)-hydroxy-(6E,8Z,11Z,14Z,16E)-eicosapentaenoate = (5S,6S)-epoxy-(18S)-hydroxy-(7E,9E,11Z,14Z,16E)-eicosapentaenoate + H2O. The catalysed reaction is (5S)-hydroperoxy-(18R)-hydroxy-(6E,8Z,11Z,14Z,16E)-eicosapentaenoate = (5S,6S)-epoxy-(18R)-hydroxy-(7E,9E,11Z,14Z,16E)-eicosapentaenoate + H2O. It catalyses the reaction (5S)-hydroperoxy-18-hydroxy-(7E,9E,11Z,14Z,16E)-eicosapentaenoate = (5S,6S)-epoxy-18-hydroxy-(7E,9E,11Z,14Z,16E)-eicosapentaenoate + H2O. The enzyme catalyses (5Z,8Z,11Z,14Z)-eicosatetraenoate + O2 = (5S)-hydroperoxy-(6E,8Z,11Z,14Z)-eicosatetraenoate. It carries out the reaction (15S)-hydroxy-(5Z,8Z,11Z,13E)-eicosatetraenoate + O2 = (5S)-hydroperoxy-(15S)-hydroxy-(6E,8Z,11Z,13E)-eicosatetraenoate. The catalysed reaction is (5S)-hydroperoxy-(6E,8Z,11Z,14Z)-eicosatetraenoate = leukotriene A4 + H2O. It catalyses the reaction (5Z,8Z,11Z,14Z)-eicosatetraenoate + O2 = (8S)-hydroperoxy-(5Z,9E,11Z,14Z)-eicosatetraenoate. The enzyme catalyses (5Z,8Z,11Z,14Z)-eicosatetraenoate + O2 = (12S)-hydroperoxy-(5Z,8Z,10E,14Z)-eicosatetraenoate. It carries out the reaction (5Z,8Z)-eicosadienoate + O2 = (5S)-hydroperoxy-(6E,8Z)-eicosadienoate. The catalysed reaction is (12S)-hydroxy-(5Z,8Z,10E,14Z)-eicosatetraenoate + O2 = (5S)-hydroperoxy-(12S)-hydroxy-(6E,8Z,10E,14Z)-eicosatetraenoate. It catalyses the reaction (5Z,8Z,11Z,14Z,17Z)-eicosapentaenoate + O2 = 5-hydroperoxy-(6E,8Z,11Z,14Z,17Z)-eicosapentaenoate. The enzyme catalyses (4Z,7Z,10Z,13Z,16Z,19Z)-docosahexaenoate + O2 = (14S)-hydroperoxy-(4Z,7Z,10Z,12E,16Z,19Z)-docosahexaenoate. It carries out the reaction (4Z,7Z,10Z,13Z,16Z,19Z)-docosahexaenoate + O2 = (7S)-hydroperoxy-(4Z,8E,10Z,13Z,16Z,19Z)-docosahexaenoate. The catalysed reaction is (4Z,7Z,10Z,13Z,16Z,19Z)-docosahexaenoate + O2 = (17S)-hydroperoxy-(4Z,7Z,10Z,13Z,15E,19Z)-docosahexaenoate. Its pathway is lipid metabolism; leukotriene A4 biosynthesis. Its activity is regulated as follows. Undergoes a sequential loss of the oxygenase and pseudoperoxidase activities which is dependent on the structural characteristics of the substrate for the reaction, on oxygen concentration and on exposure to phospholipids and calcium. 15-HETE and other 15-mono-hydroxyeicosanoids exhibit the highest inhibitory potencies in their capability of suppressing 5-lipoxygenation of arachidonic acid, whereas the other HETEs, (5S,15S)-dihydroxy-(6E,8Z,11Z,13E)-eicosatetraenoic acid (5,15-diHETE) as well as octadecanoids, are modest or poor inhibitors. The formation of (5S)-hydroperoxy-(15S)-hydroxy-(6E,8Z,11Z,13E)-eicosatetraenoate is strongly stimulated by either hydroperoxypolyenoic fatty acids or arachidonic acid. Arachidonate 5-lipoxygenase and leukotriene A4 synthase activities are allosterically increased by ATP. Catalyzes the oxygenation of arachidonate ((5Z,8Z,11Z,14Z)-eicosatetraenoate) to 5-hydroperoxyeicosatetraenoate (5-HPETE) followed by the dehydration to 5,6- epoxyeicosatetraenoate (Leukotriene A4/LTA4), the first two steps in the biosynthesis of leukotrienes, which are potent mediators of inflammation. Also catalyzes the oxygenation of arachidonate into 8-hydroperoxyicosatetraenoate (8-HPETE) and 12-hydroperoxyicosatetraenoate (12-HPETE). Displays lipoxin synthase activity being able to convert (15S)-HETE into a conjugate tetraene. Although arachidonate is the preferred substrate, this enzyme can also metabolize oxidized fatty acids derived from arachidonate such as (15S)-HETE, eicosapentaenoate (EPA) such as (18R)- and (18S)-HEPE or docosahexaenoate (DHA) which lead to the formation of specialized pro-resolving mediators (SPM) lipoxin and resolvins E and D respectively, therefore it participates in anti-inflammatory responses. Oxidation of DHA directly inhibits endothelial cell proliferation and sprouting angiogenesis via peroxisome proliferator-activated receptor gamma (PPARgamma). It does not catalyze the oxygenation of linoleic acid and does not convert (5S)-HETE to lipoxin isomers. In addition to inflammatory processes, it participates in dendritic cell migration, wound healing through an antioxidant mechanism based on heme oxygenase-1 (HO-1) regulation expression, monocyte adhesion to the endothelium via ITGAM expression on monocytes. Moreover, it helps establish an adaptive humoral immunity by regulating primary resting B cells and follicular helper T cells and participates in the CD40-induced production of reactive oxygen species (ROS) after CD40 ligation in B cells through interaction with PIK3R1 that bridges ALOX5 with CD40. May also play a role in glucose homeostasis, regulation of insulin secretion and palmitic acid-induced insulin resistance via AMPK. Can regulate bone mineralization and fat cell differentiation increases in induced pluripotent stem cells. The protein is Polyunsaturated fatty acid 5-lipoxygenase of Homo sapiens (Human).